The sequence spans 487 residues: Argininosuccinate lyase (487 aa).

This sequence belongs to the lyase 1 family. Argininosuccinate lyase subfamily.

Its subcellular location is the cytoplasm. The catalysed reaction is 2-(N(omega)-L-arginino)succinate = fumarate + L-arginine. The protein operates within amino-acid biosynthesis; L-arginine biosynthesis; L-arginine from L-ornithine and carbamoyl phosphate: step 3/3. The sequence is that of Argininosuccinate lyase from Natranaerobius thermophilus (strain ATCC BAA-1301 / DSM 18059 / JW/NM-WN-LF).